A 381-amino-acid polypeptide reads, in one-letter code: Glucose-1-phosphate adenylyltransferase (381 aa).

Residues tyrosine 100, glycine 165, 180-181 (EK), and serine 191 each bind alpha-D-glucose 1-phosphate.

It belongs to the bacterial/plant glucose-1-phosphate adenylyltransferase family. In terms of assembly, homotetramer.

It carries out the reaction alpha-D-glucose 1-phosphate + ATP + H(+) = ADP-alpha-D-glucose + diphosphate. It participates in glycan biosynthesis; glycogen biosynthesis. Functionally, involved in the biosynthesis of ADP-glucose, a building block required for the elongation reactions to produce glycogen. Catalyzes the reaction between ATP and alpha-D-glucose 1-phosphate (G1P) to produce pyrophosphate and ADP-Glc. In Mycoplasma mobile (strain ATCC 43663 / 163K / NCTC 11711) (Mesomycoplasma mobile), this protein is Glucose-1-phosphate adenylyltransferase.